Reading from the N-terminus, the 310-residue chain is Alpha/beta hydrolase domain-containing protein 17A (310 aa).

Active-site charge relay system residues include Ser190, Asp255, and His284. Phosphoserine is present on Ser307.

It belongs to the AB hydrolase superfamily. ABHD17 family. In terms of processing, palmitoylated on cysteine residues located in a cysteine cluster at the N-terminus which promotes membrane localization. Palmitoylation is required for post-synaptic localization and for depalmitoylating activity towards DLG4/PSD95.

It is found in the cell membrane. The protein resides in the endosome membrane. Its subcellular location is the cell projection. The protein localises to the dendritic spine. It localises to the postsynaptic density membrane. The catalysed reaction is S-hexadecanoyl-L-cysteinyl-[protein] + H2O = L-cysteinyl-[protein] + hexadecanoate + H(+). Functionally, hydrolyzes fatty acids from S-acylated cysteine residues in proteins. Has depalmitoylating activity towards NRAS. Has depalmitoylating activity towards DLG4/PSD95. May have depalmitoylating activity towards MAP6. This chain is Alpha/beta hydrolase domain-containing protein 17A, found in Bos taurus (Bovine).